A 353-amino-acid polypeptide reads, in one-letter code: 3'(2'),5'-bisphosphate nucleotidase 1 (353 aa).

Catalysis depends on D46, which acts as the Proton acceptor. Residues E71, D134, I136, and D137 each contribute to the Mg(2+) site. T139 acts as the Proton acceptor in catalysis. Positions 139, 235, 259, 262, 276, and 288 each coordinate adenosine 3',5'-bisphosphate. 5 residues coordinate AMP: H235, S259, K262, R276, and D288. D288 contributes to the Mg(2+) binding site.

It belongs to the inositol monophosphatase superfamily. Mg(2+) is required as a cofactor. As to expression, expressed in roots, leaves, stems, flowers and siliques.

The enzyme catalyses 3'-phosphoadenylyl sulfate + H2O = adenosine 5'-phosphosulfate + phosphate. It catalyses the reaction adenosine 3',5'-bisphosphate + H2O = AMP + phosphate. The catalysed reaction is adenosine 2',5'-bisphosphate + H2O = AMP + phosphate. It carries out the reaction 1D-myo-inositol 1,4-bisphosphate + H2O = 1D-myo-inositol 4-phosphate + phosphate. The enzyme catalyses 1D-myo-inositol 1,3,4-trisphosphate + H2O = 1D-myo-inositol 3,4-bisphosphate + phosphate. It functions in the pathway signal transduction; phosphatidylinositol signaling pathway. Its activity is regulated as follows. Inhibited non-competitively by Li(+) (IC(50)=0.20 mM) and Na(+) (IC(50)=200 mM). Functionally, phosphatase that converts adenosine 3'-phosphate 5'-phosphosulfate (PAPS) to adenosine 5'-phosphosulfate (APS) and 3'(2')-phosphoadenosine 5'-phosphate (PAP) to AMP. May regulate the flux of sulfur in the sulfur-activation pathway by converting PAPS to APS. May play a role in the biosynthesis of sulfate conjugates and RNA processing. Is also able to hydrolyze inositol 1,4-bisphosphate and inositol 1,3,4-trisphosphate. Could be considered as a negative regulator of abscisic acid (ABA)- and stress-responsive genes, through modulating the inositol 1,4,5-trisphosphate (IP3) turnover. Is also involved in salt tolerance. Acts as a suppressor of virus- and transgene-induced silencing. This chain is 3'(2'),5'-bisphosphate nucleotidase 1, found in Arabidopsis thaliana (Mouse-ear cress).